A 482-amino-acid chain; its full sequence is Glutamyl-tRNA(Gln) amidotransferase subunit A (482 aa).

Catalysis depends on charge relay system residues Lys-74 and Ser-149. Ser-173 serves as the catalytic Acyl-ester intermediate.

The protein belongs to the amidase family. GatA subfamily. In terms of assembly, heterotrimer of A, B and C subunits.

It carries out the reaction L-glutamyl-tRNA(Gln) + L-glutamine + ATP + H2O = L-glutaminyl-tRNA(Gln) + L-glutamate + ADP + phosphate + H(+). Allows the formation of correctly charged Gln-tRNA(Gln) through the transamidation of misacylated Glu-tRNA(Gln) in organisms which lack glutaminyl-tRNA synthetase. The reaction takes place in the presence of glutamine and ATP through an activated gamma-phospho-Glu-tRNA(Gln). The polypeptide is Glutamyl-tRNA(Gln) amidotransferase subunit A (Prochlorococcus marinus (strain MIT 9215)).